Reading from the N-terminus, the 337-residue chain is Lipoyl synthase (337 aa).

[4Fe-4S] cluster-binding residues include Cys81, Cys86, Cys92, Cys107, Cys111, Cys114, and Ser323. The Radical SAM core domain maps to 93–312; the sequence is FSHGTATFMI…EDYGNALGFS (220 aa).

This sequence belongs to the radical SAM superfamily. Lipoyl synthase family. It depends on [4Fe-4S] cluster as a cofactor.

It localises to the cytoplasm. The enzyme catalyses [[Fe-S] cluster scaffold protein carrying a second [4Fe-4S](2+) cluster] + N(6)-octanoyl-L-lysyl-[protein] + 2 oxidized [2Fe-2S]-[ferredoxin] + 2 S-adenosyl-L-methionine + 4 H(+) = [[Fe-S] cluster scaffold protein] + N(6)-[(R)-dihydrolipoyl]-L-lysyl-[protein] + 4 Fe(3+) + 2 hydrogen sulfide + 2 5'-deoxyadenosine + 2 L-methionine + 2 reduced [2Fe-2S]-[ferredoxin]. Its pathway is protein modification; protein lipoylation via endogenous pathway; protein N(6)-(lipoyl)lysine from octanoyl-[acyl-carrier-protein]: step 2/2. In terms of biological role, catalyzes the radical-mediated insertion of two sulfur atoms into the C-6 and C-8 positions of the octanoyl moiety bound to the lipoyl domains of lipoate-dependent enzymes, thereby converting the octanoylated domains into lipoylated derivatives. The sequence is that of Lipoyl synthase from Xanthomonas axonopodis pv. citri (strain 306).